Consider the following 248-residue polypeptide: Probable transcriptional regulatory protein Ecaj_0351 (248 aa).

The tract at residues 1–21 is disordered; the sequence is MAGHSQFANIKHRKGAQDAKR.

It belongs to the TACO1 family.

It is found in the cytoplasm. This is Probable transcriptional regulatory protein Ecaj_0351 from Ehrlichia canis (strain Jake).